We begin with the raw amino-acid sequence, 304 residues long: Nucleotide-binding protein RHA1_ro07174 (304 aa).

Glycine 24–glutamine 31 contacts ATP. Residue aspartate 75–serine 78 coordinates GTP.

This sequence belongs to the RapZ-like family.

In terms of biological role, displays ATPase and GTPase activities. This Rhodococcus jostii (strain RHA1) protein is Nucleotide-binding protein RHA1_ro07174.